An 88-amino-acid polypeptide reads, in one-letter code: Electron transfer flavoprotein regulatory factor 1 (88 aa).

The protein belongs to the complex I LYR family. In terms of assembly, homotetramer. Interacts with NDUFAB1. Interacts with ETFA. Interacts with ETFB.

The protein resides in the mitochondrion. Functionally, acts as a regulator of the electron transfer flavoprotein by promoting the removal of flavin from the ETF holoenzyme (composed of ETFA and ETFB). The polypeptide is Electron transfer flavoprotein regulatory factor 1 (Bos taurus (Bovine)).